Reading from the N-terminus, the 335-residue chain is Beta-ketoacyl-[acyl-carrier-protein] synthase III (335 aa).

Catalysis depends on residues cysteine 116 and histidine 256. Residues 257–261 (QANLR) form an ACP-binding region. Residue asparagine 286 is part of the active site.

It belongs to the thiolase-like superfamily. FabH family. In terms of assembly, homodimer.

It localises to the cytoplasm. It catalyses the reaction malonyl-[ACP] + acetyl-CoA + H(+) = 3-oxobutanoyl-[ACP] + CO2 + CoA. It participates in lipid metabolism; fatty acid biosynthesis. Functionally, catalyzes the condensation reaction of fatty acid synthesis by the addition to an acyl acceptor of two carbons from malonyl-ACP. Catalyzes the first condensation reaction which initiates fatty acid synthesis and may therefore play a role in governing the total rate of fatty acid production. Possesses both acetoacetyl-ACP synthase and acetyl transacylase activities. Its substrate specificity determines the biosynthesis of branched-chain and/or straight-chain of fatty acids. The chain is Beta-ketoacyl-[acyl-carrier-protein] synthase III from Porphyromonas gingivalis (strain ATCC 33277 / DSM 20709 / CIP 103683 / JCM 12257 / NCTC 11834 / 2561).